The chain runs to 155 residues: Transcriptional repressor NrdR (155 aa).

Residues 3 to 34 fold into a zinc finger; that stretch reads CPFCGNVDTQVKDSRPAEDHVAIRRRRFCPAC. One can recognise an ATP-cone domain in the interval 49–139; the sequence is LVVIKSSGKR…VYKNFQAADD (91 aa).

It belongs to the NrdR family. The cofactor is Zn(2+).

In terms of biological role, negatively regulates transcription of bacterial ribonucleotide reductase nrd genes and operons by binding to NrdR-boxes. The chain is Transcriptional repressor NrdR from Dinoroseobacter shibae (strain DSM 16493 / NCIMB 14021 / DFL 12).